Consider the following 300-residue polypeptide: Epimerase family protein SAB0724c (300 aa).

Belongs to the NAD(P)-dependent epimerase/dehydratase family. SDR39U1 subfamily.

This chain is Epimerase family protein SAB0724c, found in Staphylococcus aureus (strain bovine RF122 / ET3-1).